A 395-amino-acid polypeptide reads, in one-letter code: MDLCQKNETDLENAENNEIQFTEETEPTYTCPDGKSEKNHVYCLLDVSDITLEQDEKAKEFIIGTGWEEAVQGWGRTSPAACIWPRKIPKKARVGEGACSDCLVCVNLSHWSLQTKPPTEGGPEKDQSSPSQTQAAPQGPSTASRAISDICFPTYFRAEKKSLQIKEFIWCNKDWAIPGTNRGKASGNPSGGAHRGLSIPGPLTSRALLVLPPLKASLSNALDVLGKKSKNSFLQSEEKVLDVEKDGCVAYAYGLKTADGKGEKRASELAKHPMVNDTPSSPSPAAQISLLTDPEQRCLHWSLLSEKNLACPPDPSNVRYLAALQLLQKRGVQSYKSKFKAKEPRSPVITRKHVLPKAKQENRPQMLETKVFPRPVLPSLTVSRVIIPVSTHRIL.

Residues 115–144 (TKPPTEGGPEKDQSSPSQTQAAPQGPSTAS) are disordered. A compositionally biased stretch (low complexity) spans 128–141 (SSPSQTQAAPQGPS).

This is an uncharacterized protein from Homo sapiens (Human).